We begin with the raw amino-acid sequence, 185 residues long: Probable E3 ubiquitin-protein ligase ATL44 (185 aa).

Residues 29 to 49 (VVILSALLCALICVAGLAAVV) form a helical membrane-spanning segment. Residues 102–144 (CAICLTDFADGEEIRVLPLCGHSFHVECIDKWLVSRSSCPSCR) form an RING-type; atypical zinc finger. A disordered region spans residues 163 to 185 (MKDQAHRHQHHQHSSTTIPTFLP). Polar residues predominate over residues 176–185 (SSTTIPTFLP).

This sequence belongs to the RING-type zinc finger family. ATL subfamily. In terms of assembly, interacts with BIK1. In terms of processing, auto-monoubiquitination. Expressed in stems, flowers and green siliques.

Its subcellular location is the membrane. It catalyses the reaction S-ubiquitinyl-[E2 ubiquitin-conjugating enzyme]-L-cysteine + [acceptor protein]-L-lysine = [E2 ubiquitin-conjugating enzyme]-L-cysteine + N(6)-ubiquitinyl-[acceptor protein]-L-lysine.. It participates in protein modification; protein ubiquitination. Its function is as follows. E3 ubiquitin-protein ligase that possess E3 ubiquitin ligase activity in vitro and mediates protein monoubiquitination. Triggers the monoubiquitination of phosphorylated BIK1 in response to pathogen-associated molecular pattern (PAMP) detection. The sequence is that of Probable E3 ubiquitin-protein ligase ATL44 from Arabidopsis thaliana (Mouse-ear cress).